The chain runs to 205 residues: MQVQSLEVTTGKSSEIEIADGVFGVPYNEALLHQVVVAQMAGMRSANAVQKNRAAVRGGGRKPWKQKGTGRARAGSIRSPIWRGGGRAFPGGNENYTQKVNKKMWAGAMRTVLAELLRQGRLQIIQQEDFGEPRSRLGRDWLSRAGGDNVLLVMGEVPLNLFLGLRNFPRVGIAGWQDVGPADLLQYGRVLLDVEAAARLGEVYG.

A disordered region spans residues 53–77 (RAAVRGGGRKPWKQKGTGRARAGSI). The segment covering 59-70 (GGRKPWKQKGTG) has biased composition (basic residues).

The protein belongs to the universal ribosomal protein uL4 family. As to quaternary structure, part of the 50S ribosomal subunit.

Its function is as follows. One of the primary rRNA binding proteins, this protein initially binds near the 5'-end of the 23S rRNA. It is important during the early stages of 50S assembly. It makes multiple contacts with different domains of the 23S rRNA in the assembled 50S subunit and ribosome. Functionally, forms part of the polypeptide exit tunnel. The protein is Large ribosomal subunit protein uL4 of Acidithiobacillus ferrooxidans (strain ATCC 23270 / DSM 14882 / CIP 104768 / NCIMB 8455) (Ferrobacillus ferrooxidans (strain ATCC 23270)).